The chain runs to 126 residues: Protein ApaG (126 aa).

Positions 2–126 constitute an ApaG domain; it reads SALDTSIRVE…FRLTTPGLLH (125 aa).

The sequence is that of Protein ApaG from Shewanella baltica (strain OS195).